The chain runs to 361 residues: MTVPHIPRGPVMADIAAFRLTEEEKQRLLDPAIGGIILFRRNFQNIEQLKTLTAEIKALRTPELIIAVDHEGGRVQRFIEGFTRLPAMNVLGQIWDKDGASAAETAAGQVGRVLATELSACGIDLSFTPVLDLDWGNCAVIGNRSFHRNPEAVARLALALQKGLAKGGMKSCGKHFPGHGFVEGDSHLVLPEDGRSLDELEAADLAPFRIMSREGMAAVMPAHVVYPQVDTKPAGFSEIWLKQILRRDIGFKGVIFSDDLTMEGACGAGGIKERARISFEAGCDIVLVCNRPDLVDELRDGFTIPDNQDLAGRWQYMENSLGHEAVQAVMQTMGFQAAQAFVAGLASPQDTAGGVKVGEAF.

Residues Asp-69, Arg-77, Arg-144, and 174-175 (KH) contribute to the substrate site. His-187 acts as the Proton donor/acceptor in catalysis. The Nucleophile role is filled by Asp-258.

The protein belongs to the glycosyl hydrolase 3 family. NagZ subfamily.

The protein resides in the cytoplasm. The enzyme catalyses Hydrolysis of terminal non-reducing N-acetyl-D-hexosamine residues in N-acetyl-beta-D-hexosaminides.. It functions in the pathway cell wall biogenesis; peptidoglycan recycling. Its function is as follows. Plays a role in peptidoglycan recycling by cleaving the terminal beta-1,4-linked N-acetylglucosamine (GlcNAc) from peptide-linked peptidoglycan fragments, giving rise to free GlcNAc, anhydro-N-acetylmuramic acid and anhydro-N-acetylmuramic acid-linked peptides. This Neisseria gonorrhoeae (strain ATCC 700825 / FA 1090) protein is Beta-hexosaminidase.